We begin with the raw amino-acid sequence, 237 residues long: Survival of motor neuron-related-splicing factor 30 (237 aa).

Over residues 52-69 (SQPAEGTTSTKSSETVAP) the composition is skewed to polar residues. Disordered regions lie at residues 52–73 (SQPA…SHSW) and 149–198 (REYK…RSIF). The region spanning 72–132 (SWRVGDHCMA…KKVEEGRIRD (61 aa)) is the Tudor domain. Positions 142-160 (KELQAEQREYKKKKAQKKV) match the Nuclear localization signal motif. Residues 151–161 (YKKKKAQKKVQ) show a composition bias toward basic residues. Positions 162–175 (RMKELEQEREDQKS) are enriched in basic and acidic residues. The span at 176–185 (KWQQFNNKAY) shows a compositional bias: polar residues.

Belongs to the SMN family. As to quaternary structure, associates with spliceosomes.

It localises to the nucleus speckle. Its subcellular location is the nucleus. The protein resides in the cajal body. Its function is as follows. Involved in spliceosome assembly. This is Survival of motor neuron-related-splicing factor 30 (smndc1) from Danio rerio (Zebrafish).